We begin with the raw amino-acid sequence, 426 residues long: Enolase (426 aa).

Gln163 is a (2R)-2-phosphoglycerate binding site. Residue Glu205 is the Proton donor of the active site. 3 residues coordinate Mg(2+): Asp242, Glu283, and Asp310. Residues Lys335, Arg364, Ser365, and Lys386 each contribute to the (2R)-2-phosphoglycerate site. Lys335 (proton acceptor) is an active-site residue.

It belongs to the enolase family. Requires Mg(2+) as cofactor.

The protein localises to the cytoplasm. It is found in the secreted. The protein resides in the cell surface. The catalysed reaction is (2R)-2-phosphoglycerate = phosphoenolpyruvate + H2O. The protein operates within carbohydrate degradation; glycolysis; pyruvate from D-glyceraldehyde 3-phosphate: step 4/5. In terms of biological role, catalyzes the reversible conversion of 2-phosphoglycerate (2-PG) into phosphoenolpyruvate (PEP). It is essential for the degradation of carbohydrates via glycolysis. This chain is Enolase, found in Aquifex aeolicus (strain VF5).